Reading from the N-terminus, the 68-residue chain is DNA-directed RNA polymerase subunit Rpo10 (68 aa).

Positions 7, 10, 44, and 45 each coordinate Zn(2+).

Belongs to the archaeal Rpo10/eukaryotic RPB10 RNA polymerase subunit family. As to quaternary structure, part of the RNA polymerase complex. Zn(2+) serves as cofactor.

Its subcellular location is the cytoplasm. The enzyme catalyses RNA(n) + a ribonucleoside 5'-triphosphate = RNA(n+1) + diphosphate. Functionally, DNA-dependent RNA polymerase (RNAP) catalyzes the transcription of DNA into RNA using the four ribonucleoside triphosphates as substrates. The sequence is that of DNA-directed RNA polymerase subunit Rpo10 from Methanococcus vannielii (strain ATCC 35089 / DSM 1224 / JCM 13029 / OCM 148 / SB).